The primary structure comprises 131 residues: Large ribosomal subunit protein uL14m (131 aa).

The protein belongs to the universal ribosomal protein uL14 family. As to quaternary structure, component of the mitochondrial large ribosomal subunit (mt-LSU). Mature N.crassa 74S mitochondrial ribosomes consist of a small (37S) and a large (54S) subunit. The 37S small subunit contains a 16S ribosomal RNA (16S mt-rRNA) and 32 different proteins. The 54S large subunit contains a 23S rRNA (23S mt-rRNA) and 42 different proteins.

Its subcellular location is the mitochondrion. Its function is as follows. Component of the mitochondrial ribosome (mitoribosome), a dedicated translation machinery responsible for the synthesis of mitochondrial genome-encoded proteins, including at least some of the essential transmembrane subunits of the mitochondrial respiratory chain. The mitoribosomes are attached to the mitochondrial inner membrane and translation products are cotranslationally integrated into the membrane. In Neurospora crassa (strain ATCC 24698 / 74-OR23-1A / CBS 708.71 / DSM 1257 / FGSC 987), this protein is Large ribosomal subunit protein uL14m (mrpl38).